The following is a 968-amino-acid chain: RNA polymerase-associated protein RapA (968 aa).

The Helicase ATP-binding domain occupies 163-332 (EVGRRYAPRV…FARLRLLDPD (170 aa)). 176–183 (DEVGLGKT) is a binding site for ATP. The short motif at 278-281 (DEAH) is the DEAH box element. The region spanning 491-643 (RVDWLIAFLK…ELTCPSGHVL (153 aa)) is the Helicase C-terminal domain.

It belongs to the SNF2/RAD54 helicase family. RapA subfamily. Interacts with the RNAP. Has a higher affinity for the core RNAP than for the holoenzyme. Its ATPase activity is stimulated by binding to RNAP.

In terms of biological role, transcription regulator that activates transcription by stimulating RNA polymerase (RNAP) recycling in case of stress conditions such as supercoiled DNA or high salt concentrations. Probably acts by releasing the RNAP, when it is trapped or immobilized on tightly supercoiled DNA. Does not activate transcription on linear DNA. Probably not involved in DNA repair. The chain is RNA polymerase-associated protein RapA from Shewanella sp. (strain W3-18-1).